The sequence spans 103 residues: N(4)-acetylcytidine amidohydrolase (103 aa).

An ASCH domain is found at 6–101 (ITFFQRFQDD…QTQFYVIEFK (96 aa)). Lysine 21 functions as the Proton acceptor in the catalytic mechanism. The active-site Nucleophile is the threonine 24. Catalysis depends on glutamate 74, which acts as the Proton donor.

This sequence belongs to the N(4)-acetylcytidine amidohydrolase family.

The enzyme catalyses N(4)-acetylcytidine + H2O = cytidine + acetate + H(+). It catalyses the reaction N(4)-acetyl-2'-deoxycytidine + H2O = 2'-deoxycytidine + acetate + H(+). The catalysed reaction is N(4)-acetylcytosine + H2O = cytosine + acetate + H(+). In terms of biological role, catalyzes the hydrolysis of N(4)-acetylcytidine (ac4C). In Escherichia fergusonii (strain ATCC 35469 / DSM 13698 / CCUG 18766 / IAM 14443 / JCM 21226 / LMG 7866 / NBRC 102419 / NCTC 12128 / CDC 0568-73), this protein is N(4)-acetylcytidine amidohydrolase (yqfB).